The following is a 144-amino-acid chain: Large ribosomal subunit protein uL16 (144 aa).

It belongs to the universal ribosomal protein uL16 family. Part of the 50S ribosomal subunit.

Functionally, binds 23S rRNA and is also seen to make contacts with the A and possibly P site tRNAs. This chain is Large ribosomal subunit protein uL16, found in Bacillus subtilis (strain 168).